A 62-amino-acid polypeptide reads, in one-letter code: Large ribosomal subunit protein bL32 (62 aa).

Residues 1 to 16 (MAVPKRKTSPSRRGMR) show a composition bias toward basic residues. A disordered region spans residues 1–44 (MAVPKRKTSPSRRGMRRSADALKAPTYVEDKDSGELRRPHHIDL). Residues 28 to 44 (VEDKDSGELRRPHHIDL) are compositionally biased toward basic and acidic residues.

The protein belongs to the bacterial ribosomal protein bL32 family.

The polypeptide is Large ribosomal subunit protein bL32 (Methylorubrum extorquens (strain CM4 / NCIMB 13688) (Methylobacterium extorquens)).